The chain runs to 278 residues: Lipoyl-[GcvH]:protein N-lipoyltransferase (278 aa).

Residues 44–250 form the BPL/LPL catalytic domain; the sequence is RMAPSTVRGW…SLRHYAGDLV (207 aa). Residue Cys-149 is the Acyl-thioester intermediate of the active site.

It belongs to the octanoyltransferase LipL family.

The catalysed reaction is N(6)-[(R)-lipoyl]-L-lysyl-[glycine-cleavage complex H protein] + L-lysyl-[lipoyl-carrier protein] = L-lysyl-[glycine-cleavage complex H protein] + N(6)-[(R)-lipoyl]-L-lysyl-[lipoyl-carrier protein]. The protein operates within protein modification; protein lipoylation via exogenous pathway. Catalyzes the amidotransfer (transamidation) of the lipoyl moiety from lipoyl-GcvH to the lipoyl domain of the E2 subunit of lipoate-dependent enzymes. Takes part in a pathway for scavenging of lipoic acid derived from eukaryotic host cells. Cannot use lipoyl-tripeptide (DK(L)A), lipoamide (LD), or free lipoate as substrate. The protein is Lipoyl-[GcvH]:protein N-lipoyltransferase of Listeria monocytogenes serovar 1/2a (strain ATCC BAA-679 / EGD-e).